Reading from the N-terminus, the 310-residue chain is Porphobilinogen deaminase (310 aa).

C243 carries the S-(dipyrrolylmethanemethyl)cysteine modification.

The protein belongs to the HMBS family. In terms of assembly, monomer. Requires dipyrromethane as cofactor.

It carries out the reaction 4 porphobilinogen + H2O = hydroxymethylbilane + 4 NH4(+). The protein operates within porphyrin-containing compound metabolism; protoporphyrin-IX biosynthesis; coproporphyrinogen-III from 5-aminolevulinate: step 2/4. In terms of biological role, tetrapolymerization of the monopyrrole PBG into the hydroxymethylbilane pre-uroporphyrinogen in several discrete steps. This chain is Porphobilinogen deaminase, found in Mannheimia succiniciproducens (strain KCTC 0769BP / MBEL55E).